Reading from the N-terminus, the 287-residue chain is MKICRFNENRLGVVDGDEVLDVTEALSVLPSYEYPLPGYDPLIKHLDALLARIETLIKDAPRILLADVRLLSPVANPGKIIAAPINYTRHLQEVLADSAINNGVASFTQHIKKSGLFLKANSSLAGAGEGVALSHQDRRNDHEVELAIVIGKTARNVPREKSLEYVAGYCIGIDMTVRGPEERSFRKSPDSYTILGPWLVTRDEIDSPGELQMSLKVNGEVRQNANTSDLILGVEELVEFASSFYTLHPGDVIISGTPEGVGPVNPGDAMLAEIERIGTMTIAIRSV.

A divalent metal cation is bound by residues E143, E145, and D174.

It belongs to the FAH family. Homodimer.

It carries out the reaction 3-maleylpyruvate + H2O = maleate + pyruvate + H(+). Its activity is regulated as follows. Activated by Mn(2+). Inhibited by Ni(2+), Cd(2+), Co(2+) or Cu(2+). Involved in the degradation of gentisate. Catalyzes the hydrolysis of 3-maleylpyruvate, the ring-cleavage product of gentisate. The protein is Maleylpyruvate hydrolase of Aquipseudomonas alcaligenes (Pseudomonas alcaligenes).